Here is a 356-residue protein sequence, read N- to C-terminus: Heat-inducible transcription repressor HrcA (356 aa).

Belongs to the HrcA family.

Its function is as follows. Negative regulator of class I heat shock genes (grpE-dnaK-dnaJ and groELS operons). Prevents heat-shock induction of these operons. This Bartonella quintana (strain Toulouse) (Rochalimaea quintana) protein is Heat-inducible transcription repressor HrcA.